We begin with the raw amino-acid sequence, 319 residues long: ATP-dependent 6-phosphofructokinase (319 aa).

Position 11 (glycine 11) interacts with ATP. 21-25 contributes to the ADP binding site; sequence RAVVR. Residues 72-73 and 102-105 contribute to the ATP site; these read RY and GDGS. Aspartate 103 serves as a coordination point for Mg(2+). 125–127 provides a ligand contact to substrate; that stretch reads TID. Catalysis depends on aspartate 127, which acts as the Proton acceptor. An ADP-binding site is contributed by arginine 154. Residues arginine 162 and 169-171 each bind substrate; that span reads MGR. Residues 185–187, arginine 211, and 213–215 each bind ADP; these read GAE and KKH. Residues glutamate 222, arginine 243, and 249 to 252 contribute to the substrate site; that span reads HVQR.

It belongs to the phosphofructokinase type A (PFKA) family. ATP-dependent PFK group I subfamily. Prokaryotic clade 'B1' sub-subfamily. In terms of assembly, homotetramer. It depends on Mg(2+) as a cofactor.

The protein localises to the cytoplasm. It catalyses the reaction beta-D-fructose 6-phosphate + ATP = beta-D-fructose 1,6-bisphosphate + ADP + H(+). Its pathway is carbohydrate degradation; glycolysis; D-glyceraldehyde 3-phosphate and glycerone phosphate from D-glucose: step 3/4. Its activity is regulated as follows. Allosterically activated by ADP and other diphosphonucleosides, and allosterically inhibited by phosphoenolpyruvate. Its function is as follows. Catalyzes the phosphorylation of D-fructose 6-phosphate to fructose 1,6-bisphosphate by ATP, the first committing step of glycolysis. This Listeria monocytogenes serotype 4a (strain HCC23) protein is ATP-dependent 6-phosphofructokinase.